We begin with the raw amino-acid sequence, 126 residues long: Glycine cleavage system H protein (126 aa).

Residues 21-103 (TATIGISEHA…YEGGWIVKVK (83 aa)) form the Lipoyl-binding domain. An N6-lipoyllysine modification is found at Lys-62.

The protein belongs to the GcvH family. In terms of assembly, the glycine cleavage system is composed of four proteins: P, T, L and H. (R)-lipoate serves as cofactor.

Its function is as follows. The glycine cleavage system catalyzes the degradation of glycine. The H protein shuttles the methylamine group of glycine from the P protein to the T protein. This is Glycine cleavage system H protein from Vibrio campbellii (strain ATCC BAA-1116).